Here is a 122-residue protein sequence, read N- to C-terminus: UPF0102 protein XAC0764 (122 aa).

It belongs to the UPF0102 family.

This chain is UPF0102 protein XAC0764, found in Xanthomonas axonopodis pv. citri (strain 306).